A 257-amino-acid chain; its full sequence is uncharacterized protein (257 aa).

A helical membrane pass occupies residues 7–27 (LFLCVSFLLITIFIGGGGFMN).

This sequence belongs to the staphylococcal tandem lipoprotein family.

The protein resides in the cell membrane. This is an uncharacterized protein from Staphylococcus epidermidis (strain ATCC 12228 / FDA PCI 1200).